A 385-amino-acid polypeptide reads, in one-letter code: GDP-mannose-dependent alpha-(1-6)-phosphatidylinositol monomannoside mannosyltransferase (385 aa).

GDP-alpha-D-mannose is bound by residues Arg205, Lys210, Val262, and Glu299.

This sequence belongs to the glycosyltransferase group 1 family. Glycosyltransferase 4 subfamily.

The catalysed reaction is a 1,2-diacyl-sn-glycero-3-phospho-[alpha-D-mannopyranosyl-(1&lt;-&gt;6)-D-myo-inositol] + GDP-alpha-D-mannose = a 2,6-O-bis(alpha-D-mannopyranosyl)-1-phosphatidyl-1D-myo-inositol + GDP + H(+). It catalyses the reaction a 1,2-diacyl-sn-glycero-3-phospho-[alpha-D-6-acyl-mannopyranosyl-(1&lt;-&gt;6)-D-myo-inositol] + GDP-alpha-D-mannose = a 2-O-(alpha-D-mannosyl)-6-O-(6-O-acyl-alpha-D-mannosyl)-1-phosphatidyl-1D-myo-inositol + GDP + H(+). It participates in phospholipid metabolism; phosphatidylinositol metabolism. Functionally, involved in the biosynthesis of phosphatidyl-myo-inositol mannosides (PIM) which are early precursors in the biosynthesis of lipomannans (LM) and lipoarabinomannans (LAM). Catalyzes the addition of a mannosyl residue from GDP-D-mannose (GDP-Man) to the position 6 of a phosphatidyl-myo-inositol bearing an alpha-1,2-linked mannose residue (PIM1) to generate phosphatidyl-myo-inositol bearing alpha-1,2- and alpha-1,6-linked mannose residues (Ac1PIM2). PimB also catalyzes the addition of a mannosyl residue from GDP-Man to the position 6 of phosphatidyl-myo-inositol bearing an acylated alpha-1,2-linked mannose residue (Ac1PIM1) to generate monoacylated phosphatidyl-myo-inositol bearing alpha-1,2- and alpha-1,6-linked mannose residues (Ac1PIM2). The addition of the second mannosyl residue by PimB preferentially occurs before the acylation of the mannosyl residue transferred by PimA. Also able to transfer a mannosyl residue from GDP-Man to the position 6 of a phosphatidyl-myo-inositol (PI), but this reaction is very slow. The chain is GDP-mannose-dependent alpha-(1-6)-phosphatidylinositol monomannoside mannosyltransferase from Mycobacterium tuberculosis (strain CDC 1551 / Oshkosh).